A 464-amino-acid chain; its full sequence is MKSAVENLTPTRVKLNVEVPFEELKPSIDSAYKTVASQIQVPGFRKGKVPAKLIDQRVGRGYVLETAINDGLNGWYQAAVQESGIRPLSRPEVEITEVPDPSATDGGLKFAAEVDVRPEIELPDYAGIKVEVAAAESSDADVDKALDELRGRFGTLKSVDRPAADGDFLTIDITATIDGEEVDSAAGLSYQVGAGTMLEGMDEAVTGLSADEDAIFDTTLVGGDHAGEAAQVKVAVKAVKERELPEANDDFAQLASEFDTLAELREDLAKQAAESKVVEQGVEARDKVLDKLVELVEVPVPDSVVEEQLEAHFKEGNGHGDGEHDTEEHREEVRANTARAFQNEIILDAIAEKEEVDVSQNELIDYIVTTASQYGMDPNQFAQIIDQSGQVPMMVSEVRRRKALAVVLGQATVTDSEGNAVDLSDFVRPGGEEEAPAAEVTEADTAEGEATEVPAEDEKAEAKA.

Residues 166–245 form the PPIase FKBP-type domain; that stretch reads GDFLTIDITA…VKAVKERELP (80 aa). A disordered region spans residues 426–464; that stretch reads FVRPGGEEEAPAAEVTEADTAEGEATEVPAEDEKAEAKA. Acidic residues predominate over residues 432–455; sequence EEEAPAAEVTEADTAEGEATEVPA.

This sequence belongs to the FKBP-type PPIase family. Tig subfamily.

The protein resides in the cytoplasm. It carries out the reaction [protein]-peptidylproline (omega=180) = [protein]-peptidylproline (omega=0). In terms of biological role, involved in protein export. Acts as a chaperone by maintaining the newly synthesized protein in an open conformation. Functions as a peptidyl-prolyl cis-trans isomerase. The sequence is that of Trigger factor from Pseudarthrobacter chlorophenolicus (strain ATCC 700700 / DSM 12829 / CIP 107037 / JCM 12360 / KCTC 9906 / NCIMB 13794 / A6) (Arthrobacter chlorophenolicus).